Reading from the N-terminus, the 596-residue chain is Aspartate--tRNA(Asp/Asn) ligase (596 aa).

Glutamate 172 serves as a coordination point for L-aspartate. Residues 196 to 199 form an aspartate region; the sequence is QLFK. Arginine 218 lines the L-aspartate pocket. ATP contacts are provided by residues 218–220 and glutamine 227; that span reads RDE. Residue histidine 455 coordinates L-aspartate. Residue glutamate 489 coordinates ATP. L-aspartate is bound at residue arginine 496. 541-544 contributes to the ATP binding site; sequence GLDR.

This sequence belongs to the class-II aminoacyl-tRNA synthetase family. Type 1 subfamily. Homodimer.

It localises to the cytoplasm. It carries out the reaction tRNA(Asx) + L-aspartate + ATP = L-aspartyl-tRNA(Asx) + AMP + diphosphate. Functionally, aspartyl-tRNA synthetase with relaxed tRNA specificity since it is able to aspartylate not only its cognate tRNA(Asp) but also tRNA(Asn). Reaction proceeds in two steps: L-aspartate is first activated by ATP to form Asp-AMP and then transferred to the acceptor end of tRNA(Asp/Asn). The protein is Aspartate--tRNA(Asp/Asn) ligase of Bordetella bronchiseptica (strain ATCC BAA-588 / NCTC 13252 / RB50) (Alcaligenes bronchisepticus).